The chain runs to 310 residues: Lipoyl synthase (310 aa).

Cys61, Cys66, Cys72, Cys87, Cys91, Cys94, and Ser300 together coordinate [4Fe-4S] cluster. The Radical SAM core domain occupies 73–289 (FNNGTATFMI…EYIALSLGFS (217 aa)).

It belongs to the radical SAM superfamily. Lipoyl synthase family. It depends on [4Fe-4S] cluster as a cofactor.

The protein resides in the cytoplasm. The catalysed reaction is [[Fe-S] cluster scaffold protein carrying a second [4Fe-4S](2+) cluster] + N(6)-octanoyl-L-lysyl-[protein] + 2 oxidized [2Fe-2S]-[ferredoxin] + 2 S-adenosyl-L-methionine + 4 H(+) = [[Fe-S] cluster scaffold protein] + N(6)-[(R)-dihydrolipoyl]-L-lysyl-[protein] + 4 Fe(3+) + 2 hydrogen sulfide + 2 5'-deoxyadenosine + 2 L-methionine + 2 reduced [2Fe-2S]-[ferredoxin]. The protein operates within protein modification; protein lipoylation via endogenous pathway; protein N(6)-(lipoyl)lysine from octanoyl-[acyl-carrier-protein]: step 2/2. Catalyzes the radical-mediated insertion of two sulfur atoms into the C-6 and C-8 positions of the octanoyl moiety bound to the lipoyl domains of lipoate-dependent enzymes, thereby converting the octanoylated domains into lipoylated derivatives. This chain is Lipoyl synthase, found in Buchnera aphidicola subsp. Cinara cedri (strain Cc).